Reading from the N-terminus, the 727-residue chain is Glucans biosynthesis glucosyltransferase H (727 aa).

Residues 18 to 43 (SAMPNERPGAMEPQSLSQMPEGFPRR) are disordered. 7 helical membrane passes run 58 to 78 (FFVVGGALALSAFAIYEMGAV), 94 to 114 (LFAINFCWIALAFCSGIAGFF), 278 to 298 (LQQFAARIYGPVIGTGLGWWV), 408 to 428 (IMAYLSSPFWLLLILTGLMLA), 460 to 480 (LFYITMGVLFGPKIFGVLLLL), 496 to 516 (ILSVIFEVILSALIAPIMMFI), and 572 to 592 (LLAWMSPALIGLWLAVPISAW).

Belongs to the glycosyltransferase 2 family. OpgH subfamily.

It is found in the cell inner membrane. It functions in the pathway glycan metabolism; osmoregulated periplasmic glucan (OPG) biosynthesis. Its function is as follows. Involved in the biosynthesis of osmoregulated periplasmic glucans (OPGs). The sequence is that of Glucans biosynthesis glucosyltransferase H from Shewanella sp. (strain ANA-3).